Consider the following 50-residue polypeptide: Large ribosomal subunit protein eL39 (50 aa).

A compositionally biased stretch (basic residues) spans 1 to 12 (MGKKSKASKKRL). 2 disordered regions span residues 1 to 20 (MGKKSKASKKRLAKLERQNS) and 30 to 50 (TNRDVQRNPKRRNWRRNDTDE).

This sequence belongs to the eukaryotic ribosomal protein eL39 family.

The sequence is that of Large ribosomal subunit protein eL39 (rpl39e) from Halobacterium salinarum (strain ATCC 700922 / JCM 11081 / NRC-1) (Halobacterium halobium).